Here is a 180-residue protein sequence, read N- to C-terminus: Large ribosomal subunit protein uL16 (180 aa).

Belongs to the universal ribosomal protein uL16 family.

The sequence is that of Large ribosomal subunit protein uL16 from Thermococcus sibiricus (strain DSM 12597 / MM 739).